The following is a 394-amino-acid chain: Putative bacilysin exporter BacE (394 aa).

Transmembrane regions (helical) follow at residues 11–31 (LLYG…ALLI), 43–63 (SGVI…GVLV), 69–89 (IKIM…LTFL), 92–112 (GEYP…GVFF), 142–162 (IIVG…ELAV), 166–186 (GVTY…FVPI), 215–235 (MFTM…FPIV), 244–264 (IGNF…AALV), 288–308 (LFLF…FFIA), 332–352 (IFSV…MFIN), and 353–373 (ILSA…LFLH).

This sequence belongs to the major facilitator superfamily. Drug:H(+) antiporter-3 (DHA3) (TC 2.A.1.21) family.

The protein resides in the cell membrane. In terms of biological role, part of the bacilysin biosynthesis operon. May be involved in self-resistance to bacilysin by permitting efflux of this antibiotic. This is Putative bacilysin exporter BacE (bacE) from Bacillus subtilis (strain 168).